Consider the following 237-residue polypeptide: Purine nucleoside phosphorylase DeoD-type (237 aa).

His5 lines the a purine D-ribonucleoside pocket. Phosphate contacts are provided by residues Gly21, Arg25, Arg44, and 88-91 (RVGS). Residues 180-182 (EME) and 204-205 (SD) contribute to the a purine D-ribonucleoside site. The Proton donor role is filled by Asp205.

Belongs to the PNP/UDP phosphorylase family. Homohexamer; trimer of homodimers.

It catalyses the reaction a purine D-ribonucleoside + phosphate = a purine nucleobase + alpha-D-ribose 1-phosphate. It carries out the reaction a purine 2'-deoxy-D-ribonucleoside + phosphate = a purine nucleobase + 2-deoxy-alpha-D-ribose 1-phosphate. Catalyzes the reversible phosphorolytic breakdown of the N-glycosidic bond in the beta-(deoxy)ribonucleoside molecules, with the formation of the corresponding free purine bases and pentose-1-phosphate. The protein is Purine nucleoside phosphorylase DeoD-type of Edwardsiella ictaluri (strain 93-146).